Here is a 380-residue protein sequence, read N- to C-terminus: Cytochrome b (380 aa).

A run of 4 helical transmembrane segments spans residues 34–54 (FGSL…LLAM), 78–99 (WLIR…FLHI), 114–134 (WNTG…GYVL), and 179–199 (FFAL…IHLT). Residues His-84 and His-98 each contribute to the heme b site. His-183 and His-197 together coordinate heme b. Residue His-202 participates in a ubiquinone binding. Transmembrane regions (helical) follow at residues 227–247 (LKDI…ALFS), 289–309 (LGGV…PFLH), 321–341 (LSQI…WIGS), and 348–368 (FIII…ILFP).

This sequence belongs to the cytochrome b family. As to quaternary structure, the cytochrome bc1 complex contains 11 subunits: 3 respiratory subunits (MT-CYB, CYC1 and UQCRFS1), 2 core proteins (UQCRC1 and UQCRC2) and 6 low-molecular weight proteins (UQCRH/QCR6, UQCRB/QCR7, UQCRQ/QCR8, UQCR10/QCR9, UQCR11/QCR10 and a cleavage product of UQCRFS1). This cytochrome bc1 complex then forms a dimer. Heme b is required as a cofactor.

The protein resides in the mitochondrion inner membrane. In terms of biological role, component of the ubiquinol-cytochrome c reductase complex (complex III or cytochrome b-c1 complex) that is part of the mitochondrial respiratory chain. The b-c1 complex mediates electron transfer from ubiquinol to cytochrome c. Contributes to the generation of a proton gradient across the mitochondrial membrane that is then used for ATP synthesis. This chain is Cytochrome b (MT-CYB), found in Pavo muticus (Green peafowl).